The following is a 672-amino-acid chain: MSALPPSSSSPAVLALHSATHKDTILHKFDTLRRSELLCDITLIVEDVHFKAHKALLAASSEYFSALFTAEEQVSQSLYKLDGMTANTFSSVLEFMYSAVVLVDESSSEQLMEMARFLVIPDLIKAHEDLQAVDEHMQVKRKRGRPKKNQDLSQKENPESELQAQTSSEIQEVNEEPASPATDGSDGEFNPREERRREGKRKIKQPIRLKGFRMDDLMEGKEPGKRGRRRKYPDTEARCEECGKVFKSHLFLKIHQRTHTGEKPFRCSVCGKEFTQKHTLLVHQRMHTGEKPYICTVCSKALSTKHSLLEHMNLHTENKLFTCEECGKSFSQQRQLKSHNRVHTGKGLPECAECHHKFMDAAQLKKHLRTHTGEKPFTCEICGKCFTAKSTLQTHIRIHRGEKPYVCKVCDKTFSDPSARRRHEVSHTGKKTFSCSICKVSFARKDNLKAHIKTHNKENPPAQAESTDKPPQSAPEQQEQEQQQQQQTSGDKELHSILQLQPFQLPAHGEQEIQLLVTGENLSLDQEQSISIITSEDTEQSLALLTQPSGHVQNLAVVTPDGNAQIQTISVLGGEVNGGDPEQMHVITLSKEAMEQLQVHHGAPQQLQVIHQLSEEQTGPVAGIHISGQSGQAISISQTTEQIPSDQIQGQTFQIQAGTVSYLYTTSMNPQN.

A BTB domain is found at 39-105 (CDITLIVEDV…MYSAVVLVDE (67 aa)). Positions 136–208 (HMQVKRKRGR…GKRKIKQPIR (73 aa)) are disordered. Positions 140–152 (KRKRGRPKKNQDL) form a DNA-binding region, a.T hook 1. The span at 148 to 158 (KNQDLSQKENP) shows a compositional bias: basic and acidic residues. The span at 160–171 (SELQAQTSSEIQ) shows a compositional bias: polar residues. Residues 198–208 (EGKRKIKQPIR) are compositionally biased toward basic residues. A DNA-binding region (a.T hook 2) is located at residues 223–235 (PGKRGRRRKYPDT). 8 C2H2-type zinc fingers span residues 237 to 259 (ARCE…QRTH), 265 to 287 (FRCS…QRMH), 293 to 315 (YICT…MNLH), 321 to 343 (FTCE…NRVH), 349 to 371 (PECA…LRTH), 377 to 399 (FTCE…IRIH), 405 to 427 (YVCK…EVSH), and 433 to 455 (FSCS…IKTH). Residues 453 to 492 (KTHNKENPPAQAESTDKPPQSAPEQQEQEQQQQQQTSGDK) are disordered. Residues 476–487 (EQQEQEQQQQQQ) are compositionally biased toward low complexity.

This sequence belongs to the krueppel C2H2-type zinc-finger protein family.

It localises to the nucleus. May be involved in BMP2-induced transcription. This Danio rerio (Zebrafish) protein is Zinc finger and BTB domain-containing protein 24 (zbtb24).